A 710-amino-acid chain; its full sequence is Interferon-induced GTP-binding protein Mx2 (710 aa).

A disordered region spans residues 1-87; that stretch reads MSLSFRPLKY…RSKGPENNLY (87 aa). 2 stretches are compositionally biased toward polar residues: residues 39 to 50 and 58 to 79; these read QTMSPPQWQVEE and NNFS…QQRS. One can recognise a Dynamin-type G domain in the interval 112–383; the sequence is DLALPAIAVI…LIWHINKSLP (272 aa). The segment at 122-129 is G1 motif; that stretch reads GDQSSGKS. GTP is bound at residue 122–129; sequence GDQSSGKS. The G2 motif stretch occupies residues 147–149; it reads ITR. A G3 motif region spans residues 221 to 224; that stretch reads DLPG. GTP is bound by residues 221–225 and 290–293; these read DLPGI and TKPD. Residues 290 to 293 form a G4 motif region; sequence TKPD. Residues 322–325 are G5 motif; that stretch reads KCRG. One can recognise a GED domain in the interval 619 to 710; that stretch reads IVEIGVHLNA…ALYEFPHFKG (92 aa).

The protein belongs to the TRAFAC class dynamin-like GTPase superfamily. Dynamin/Fzo/YdjA family.

It is found in the cytoplasm. Its subcellular location is the nucleus. Interferon-induced dynamin-like GTPase with antiviral activity against vesicular stomatitis virus (VSV). This chain is Interferon-induced GTP-binding protein Mx2 (MX2), found in Bubalus bubalis (Domestic water buffalo).